The following is a 644-amino-acid chain: Threonine--tRNA ligase (644 aa).

A TGS domain is found at 3–64 (EMIRITFPDG…QEDGSISIIT (62 aa)). The tract at residues 245 to 542 (DHRKLGKELE…LIEEYKGAFP (298 aa)) is catalytic. Residues cysteine 338, histidine 389, and histidine 519 each coordinate Zn(2+).

It belongs to the class-II aminoacyl-tRNA synthetase family. Homodimer. The cofactor is Zn(2+).

It is found in the cytoplasm. The catalysed reaction is tRNA(Thr) + L-threonine + ATP = L-threonyl-tRNA(Thr) + AMP + diphosphate + H(+). In terms of biological role, catalyzes the attachment of threonine to tRNA(Thr) in a two-step reaction: L-threonine is first activated by ATP to form Thr-AMP and then transferred to the acceptor end of tRNA(Thr). Also edits incorrectly charged L-seryl-tRNA(Thr). This is Threonine--tRNA ligase from Geobacillus sp. (strain WCH70).